Here is a 470-residue protein sequence, read N- to C-terminus: Sorting nexin-17 (470 aa).

The 109-residue stretch at methionine 1–threonine 109 folds into the PX domain. Residues arginine 36, serine 38, lysine 62, and arginine 75 each coordinate a 1,2-diacyl-sn-glycero-3-phospho-(1D-myo-inositol-3-phosphate). One can recognise a Ras-associating domain in the interval glutamate 115–tryptophan 206. An FERM-like region spans residues glutamate 115 to leucine 432. The tract at residues glycine 270–leucine 432 is PTB-like F3 module. Serine 336, serine 407, serine 409, serine 415, serine 421, serine 437, and serine 440 each carry phosphoserine. The disordered stretch occupies residues glycine 401–arginine 426.

This sequence belongs to the sorting nexin family. As to quaternary structure, monomer. Interacts with APP (via cytoplasmic YXNPXY motif). Interacts with KIF1B. Interacts with the C-termini of P-selectin, PTC, LDLR, VLDLR, LRP1 and LRP8. Interacts with KRIT1 (via N-terminus). Interacts with HRAS. Interacts with ITGB1 and ITGB5 (via NPxY motif). Interacts with CCDC22 and CCDC93; the interaction associates SNX17 with the CCC complex. Interacts (via C-terminus) with VPS26C and VPS35L; the interactions are direct and associate SNX17 with the retriever complex. In terms of tissue distribution, detected in brain neurons (at protein level). Broadly expressed, with highest levels in brain and placenta, and lowest levels in colon, intestine and liver.

The protein localises to the cytoplasm. It localises to the early endosome. It is found in the cytoplasmic vesicle membrane. Critical regulator of endosomal recycling of numerous surface proteins, including integrins, signaling receptor and channels. Binds to NPxY sequences in the cytoplasmic tails of target cargos. Associates with retriever and CCC complexes to prevent lysosomal degradation and promote cell surface recycling of numerous cargos such as integrins ITGB1, ITGB5 and their associated alpha subunits. Also required for maintenance of normal cell surface levels of APP and LRP1. Interacts with membranes containing phosphatidylinositol 3-phosphate (PtdIns(3P)). The chain is Sorting nexin-17 (Snx17) from Mus musculus (Mouse).